The chain runs to 293 residues: ATP synthase gamma chain (293 aa).

The protein belongs to the ATPase gamma chain family. As to quaternary structure, F-type ATPases have 2 components, CF(1) - the catalytic core - and CF(0) - the membrane proton channel. CF(1) has five subunits: alpha(3), beta(3), gamma(1), delta(1), epsilon(1). CF(0) has three main subunits: a, b and c.

It is found in the cell membrane. In terms of biological role, produces ATP from ADP in the presence of a proton gradient across the membrane. The gamma chain is believed to be important in regulating ATPase activity and the flow of protons through the CF(0) complex. This chain is ATP synthase gamma chain, found in Streptococcus gordonii (strain Challis / ATCC 35105 / BCRC 15272 / CH1 / DL1 / V288).